A 297-amino-acid chain; its full sequence is Acetylglutamate kinase (297 aa).

Residues 68-69 (GG), Arg90, and Asn189 each bind substrate.

The protein belongs to the acetylglutamate kinase family. ArgB subfamily.

The protein resides in the cytoplasm. It catalyses the reaction N-acetyl-L-glutamate + ATP = N-acetyl-L-glutamyl 5-phosphate + ADP. Its pathway is amino-acid biosynthesis; L-arginine biosynthesis; N(2)-acetyl-L-ornithine from L-glutamate: step 2/4. Functionally, catalyzes the ATP-dependent phosphorylation of N-acetyl-L-glutamate. The chain is Acetylglutamate kinase from Akkermansia muciniphila (strain ATCC BAA-835 / DSM 22959 / JCM 33894 / BCRC 81048 / CCUG 64013 / CIP 107961 / Muc).